We begin with the raw amino-acid sequence, 102 residues long: Small ribosomal subunit protein uS10 (102 aa).

This sequence belongs to the universal ribosomal protein uS10 family. Part of the 30S ribosomal subunit.

Its function is as follows. Involved in the binding of tRNA to the ribosomes. This Methanoculleus marisnigri (strain ATCC 35101 / DSM 1498 / JR1) protein is Small ribosomal subunit protein uS10.